The sequence spans 449 residues: UDP-N-acetylglucosamine 1-carboxyvinyltransferase (449 aa).

Positions 1–12 (MQVTVNEHDAVE) are enriched in basic and acidic residues. The disordered stretch occupies residues 1 to 30 (MQVTVNEHDAVERVATATPAGNREAHAHGT). 51–52 (KN) serves as a coordination point for phosphoenolpyruvate. Arg-121 contributes to the UDP-N-acetyl-alpha-D-glucosamine binding site. Catalysis depends on Cys-145, which acts as the Proton donor. Position 145 is a 2-(S-cysteinyl)pyruvic acid O-phosphothioketal (Cys-145). Residues 150 to 154 (RPVDQ), Asp-333, and Ile-355 contribute to the UDP-N-acetyl-alpha-D-glucosamine site.

This sequence belongs to the EPSP synthase family. MurA subfamily.

It localises to the cytoplasm. It catalyses the reaction phosphoenolpyruvate + UDP-N-acetyl-alpha-D-glucosamine = UDP-N-acetyl-3-O-(1-carboxyvinyl)-alpha-D-glucosamine + phosphate. The protein operates within cell wall biogenesis; peptidoglycan biosynthesis. Cell wall formation. Adds enolpyruvyl to UDP-N-acetylglucosamine. The sequence is that of UDP-N-acetylglucosamine 1-carboxyvinyltransferase from Burkholderia pseudomallei (strain 1710b).